The sequence spans 931 residues: Protocadherin gamma-B2 (931 aa).

Residues 1–30 (MKASSGRCGLVRWLQVLLPFLLSLFPGALP) form the signal peptide. Cadherin domains are found at residues 31-133 (VQIR…TPLF), 134-242 (KQTK…PPVF), 243-347 (SQDV…APEV), 348-452 (IVTS…APVF), 453-562 (QQTS…APRV), and 570-675 (DGSA…LPDL). Residues 31 to 691 (VQIRYSIPEE…SDPQAELQFY (661 aa)) lie on the Extracellular side of the membrane. 2 N-linked (GlcNAc...) asparagine glycosylation sites follow: Asn419 and Asn545. A helical transmembrane segment spans residues 692-712 (LVVALALISVLFFLAVILAIS). Over 713 to 931 (LRLRRSSRSD…KKKSGKKEKK (219 aa)) the chain is Cytoplasmic. 2 disordered regions span residues 814–840 (DWRFSQAQRPGTSGSQNGDDTGTWPNN) and 901–931 (ATLTNAAGKRDGKAPAGGNGNKKKSGKKEKK). Positions 815–840 (WRFSQAQRPGTSGSQNGDDTGTWPNN) are enriched in polar residues. Basic residues predominate over residues 921-931 (NKKKSGKKEKK).

It localises to the cell membrane. Potential calcium-dependent cell-adhesion protein. May be involved in the establishment and maintenance of specific neuronal connections in the brain. The sequence is that of Protocadherin gamma-B2 (PCDHGB2) from Pan troglodytes (Chimpanzee).